Reading from the N-terminus, the 119-residue chain is Beta-2-microglobulin (119 aa).

Positions 1-20 (MARSVAVVFLMLLSVVCLDA) are cleaved as a signal peptide. The region spanning 25–114 (PQVQVYTRHP…TTLKEPKVVT (90 aa)) is the Ig-like C1-type domain. Cysteine 45 and cysteine 100 are oxidised to a cystine.

The protein belongs to the beta-2-microglobulin family. Heterodimer of an alpha chain and a beta chain. Beta-2-microglobulin is the beta-chain of major histocompatibility complex class I molecules.

It is found in the secreted. In terms of biological role, component of the class I major histocompatibility complex (MHC). Involved in the presentation of peptide antigens to the immune system. The sequence is that of Beta-2-microglobulin (B2M) from Cricetulus griseus (Chinese hamster).